A 232-amino-acid polypeptide reads, in one-letter code: Octanoyltransferase (232 aa).

The BPL/LPL catalytic domain maps to 43-231 (DQTPNYFLFV…HFTQLFDCTV (189 aa)). Substrate-binding positions include 88–95 (RGGDITYH), 160–162 (ALG), and 173–175 (GFA). Residue cysteine 191 is the Acyl-thioester intermediate of the active site.

It belongs to the LipB family.

The protein resides in the cytoplasm. The enzyme catalyses octanoyl-[ACP] + L-lysyl-[protein] = N(6)-octanoyl-L-lysyl-[protein] + holo-[ACP] + H(+). Its pathway is protein modification; protein lipoylation via endogenous pathway; protein N(6)-(lipoyl)lysine from octanoyl-[acyl-carrier-protein]: step 1/2. Functionally, catalyzes the transfer of endogenously produced octanoic acid from octanoyl-acyl-carrier-protein onto the lipoyl domains of lipoate-dependent enzymes. Lipoyl-ACP can also act as a substrate although octanoyl-ACP is likely to be the physiological substrate. In Flavobacterium psychrophilum (strain ATCC 49511 / DSM 21280 / CIP 103535 / JIP02/86), this protein is Octanoyltransferase.